A 408-amino-acid polypeptide reads, in one-letter code: Succinylornithine transaminase (408 aa).

Lys252 carries the post-translational modification N6-(pyridoxal phosphate)lysine.

This sequence belongs to the class-III pyridoxal-phosphate-dependent aminotransferase family. AstC subfamily. Requires pyridoxal 5'-phosphate as cofactor.

It carries out the reaction N(2)-succinyl-L-ornithine + 2-oxoglutarate = N-succinyl-L-glutamate 5-semialdehyde + L-glutamate. It functions in the pathway amino-acid degradation; L-arginine degradation via AST pathway; L-glutamate and succinate from L-arginine: step 3/5. Catalyzes the transamination of N(2)-succinylornithine and alpha-ketoglutarate into N(2)-succinylglutamate semialdehyde and glutamate. Can also act as an acetylornithine aminotransferase. The protein is Succinylornithine transaminase of Salmonella choleraesuis (strain SC-B67).